Here is a 1175-residue protein sequence, read N- to C-terminus: Structural maintenance of chromosomes protein 2-1 (1175 aa).

In terms of domain architecture, Zinc-hook spans 2-1161; the sequence is HIKEICLEGF…NVLFRTKFVD (1160 aa). 32-39 is a binding site for ATP; the sequence is GLNGSGKS. A coiled-coil region spans residues 172–508; sequence RMYENKKEAA…AQLANFQFTY (337 aa). One can recognise an SMC hinge domain in the interval 518–638; that stretch reads SKVKGVVAKL…KTTDVAKEVA (121 aa). Positions 673-1028 form a coiled coil; sequence LRKLHDLAEA…ELDEKKKETL (356 aa).

It belongs to the SMC family. SMC2 subfamily. Forms a heterodimer with SMC4. Component of the condensin complex, which contains the SMC2 and SMC4 heterodimer, and three non SMC subunits that probably regulate the complex: CAPH, CAPD2 and CAPG. As to expression, highly expressed in roots and young floral buds.

It is found in the nucleus. In terms of biological role, central component of the condensin complex, a complex required for conversion of interphase chromatin into mitotic-like condense chromosomes. The condensin complex probably introduces positive supercoils into relaxed DNA in the presence of type I topoisomerases and converts nicked DNA into positive knotted forms in the presence of type II topoisomerases. Also involved in chromosome segregation in meiosis. This Arabidopsis thaliana (Mouse-ear cress) protein is Structural maintenance of chromosomes protein 2-1 (SMC2-1).